Consider the following 642-residue polypeptide: Uromodulin (642 aa).

An N-terminal signal peptide occupies residues 1–24 (MGIPLTWMLLVMMVTSWFTLAEAS). N-linked (GlcNAc...) asparagine glycans are attached at residues Asn-25 and Asn-38. Residues 28–64 (EARRCSECHNNATCTVDGVVTTCSCQTGFTGDGLVCE) enclose the EGF-like 1 domain. 21 cysteine pairs are disulfide-bonded: Cys-32–Cys-41, Cys-35–Cys-50, Cys-52–Cys-63, Cys-69–Cys-82, Cys-77–Cys-91, Cys-93–Cys-105, Cys-111–Cys-125, Cys-119–Cys-134, Cys-136–Cys-147, Cys-149–Cys-160, Cys-154–Cys-171, Cys-175–Cys-268, Cys-196–Cys-283, Cys-218–Cys-256, Cys-224–Cys-288, Cys-249–Cys-257, Cys-298–Cys-307, Cys-301–Cys-316, Cys-318–Cys-348, Cys-336–Cys-426, and Cys-367–Cys-390. Residues 65–106 (DMDECATPWTHNCSNSSCVNTPGSFKCSCQDGFRLTPELSCT) enclose the EGF-like 2; calcium-binding domain. N-linked (GlcNAc...) asparagine glycans are attached at residues Asn-76 and Asn-79. The EGF-like 3; calcium-binding domain maps to 107 to 148 (DVDECSEQGLSNCHALATCVNTEGDYLCVCPEGFTGDGWYCE). The interval 149-172 (CSPGSCEPGLDCLPQGPDGKLVCQ) is beta hairpin. Residues 173 to 292 (DPCNTYETLT…CNLAYCTDPS (120 aa)) form a D10C region. The N-linked (GlcNAc...) asparagine glycan is linked to Asn-233. The N-linked (GlcNAc...) asparagine glycan is linked to Asn-276. The EGF-like 4 domain occupies 293–324 (SVEGTCEECRVDEDCISDNGRWRCQCKQDSNI). Residue Asn-323 is glycosylated (N-linked (GlcNAc...) asparagine). The ZP-N stretch occupies residues 335-430 (ECGANDIKMS…RMNFECSYPL (96 aa)). Residues 335-590 (ECGANDIKMS…PTCSGTRFRS (256 aa)) enclose the ZP domain. Residues Asn-397 and Asn-448 are each glycosylated (N-linked (GlcNAc...) asparagine). Residues 431 to 454 (DMKVSLKTSLQPMVSALNISLGGT) form a flexible ZP-N/ZP-C linker; important for secretion and polymerization into filaments region. The internal hydrophobic patch (IHP) stretch occupies residues 455–465 (GKFTVRMALFQ). The interval 455–590 (GKFTVRMALF…PTCSGTRFRS (136 aa)) is ZP-C. Intrachain disulfides connect Cys-507–Cys-567, Cys-528–Cys-583, and Cys-572–Cys-579. A glycan (N-linked (GlcNAc...) asparagine) is linked at Asn-514. Residues 587-590 (RFRS) form an essential for cleavage by HPN region. The segment at 599-607 (VLNLGPITR) is external hydrophobic patch (EHP); regulates polymerization into filaments. Ala-618 carries the GPI-anchor amidated alanine lipid modification. A propeptide spans 619–642 (SSNLRLLSIWLLLFPSATLIFMVQ) (removed in mature form).

In terms of assembly, homodimer that then polymerizes into long filaments. The filaments can additionally assemble laterally to form a sheet. The filaments consist of a zigzag-shaped backbone with laterally protruding arms which interact with bacterial adhesin fimH. Two fimH molecules can bind to a single UMOD monomer. In terms of processing, N-glycosylated. Post-translationally, proteolytically cleaved at a conserved C-terminal proteolytic cleavage site to generate the secreted form found in urine. This cleavage is catalyzed by HPN. As to expression, detected in urine (secreted form). Detected in kidney thick ascending limb epithelial cells (at protein level).

The protein resides in the secreted. It is found in the apical cell membrane. It localises to the basolateral cell membrane. The protein localises to the cell projection. Its subcellular location is the cilium membrane. Functionally, functions in biogenesis and organization of the apical membrane of epithelial cells of the thick ascending limb of Henle's loop (TALH), where it promotes formation of complex filamentous gel-like structure that may play a role in the water barrier permeability. May serve as a receptor for binding and endocytosis of cytokines (IL-1, IL-2) and TNF. Facilitates neutrophil migration across renal epithelia. Its function is as follows. In the urine, may contribute to colloid osmotic pressure, retards passage of positively charged electrolytes and inhibits formation of liquid containing supersaturated salts and subsequent formation of salt crystals. Protects against urinary tract infections by binding to type 1 fimbriated E.coli. Binds to the bacterial adhesin fimH which mediates the stable formation of bacterial aggregates, prevents the binding of E.coli to uroplakins UPK1A and UPK1B which act as urothelial receptors for type I fimbriae, and allows for pathogen clearance through micturation. Also promotes aggregation of other bacteria including K.pneumoniae, P.aeruginosa and S.mitis and so may also protect against other uropathogens. In Mus musculus (Mouse), this protein is Uromodulin (Umod).